The primary structure comprises 217 residues: Large ribosomal subunit protein uL1 (217 aa).

Belongs to the universal ribosomal protein uL1 family. In terms of assembly, component of the large ribosomal subunit (LSU). Mature ribosomes consist of a small (40S) and a large (60S) subunit. The 40S subunit contains about 32 different proteins and 1 molecule of RNA (18S). The 60S subunit contains 45 different proteins and 3 molecules of RNA (25S, 5.8S and 5S). uL1 forms part of the L1 stalk.

The protein localises to the cytoplasm. Component of the ribosome, a large ribonucleoprotein complex responsible for the synthesis of proteins in the cell. The small ribosomal subunit (SSU) binds messenger RNAs (mRNAs) and translates the encoded message by selecting cognate aminoacyl-transfer RNA (tRNA) molecules. The large subunit (LSU) contains the ribosomal catalytic site termed the peptidyl transferase center (PTC), which catalyzes the formation of peptide bonds, thereby polymerizing the amino acids delivered by tRNAs into a polypeptide chain. The nascent polypeptides leave the ribosome through a tunnel in the LSU and interact with protein factors that function in enzymatic processing, targeting, and the membrane insertion of nascent chains at the exit of the ribosomal tunnel. uL1 forms part of the L1 stalk, a mobile element that plays a role in evacuating the exit-site tRNA. This chain is Large ribosomal subunit protein uL1 (RPL10A), found in Candida albicans (strain SC5314 / ATCC MYA-2876) (Yeast).